A 131-amino-acid chain; its full sequence is Phosphoribosyl-AMP cyclohydrolase (131 aa).

Residue D89 participates in Mg(2+) binding. A Zn(2+)-binding site is contributed by C90. Mg(2+) contacts are provided by D91 and D93. Residues C106 and C113 each contribute to the Zn(2+) site.

It belongs to the PRA-CH family. In terms of assembly, homodimer. The cofactor is Mg(2+). It depends on Zn(2+) as a cofactor.

It localises to the cytoplasm. It catalyses the reaction 1-(5-phospho-beta-D-ribosyl)-5'-AMP + H2O = 1-(5-phospho-beta-D-ribosyl)-5-[(5-phospho-beta-D-ribosylamino)methylideneamino]imidazole-4-carboxamide. It participates in amino-acid biosynthesis; L-histidine biosynthesis; L-histidine from 5-phospho-alpha-D-ribose 1-diphosphate: step 3/9. Its function is as follows. Catalyzes the hydrolysis of the adenine ring of phosphoribosyl-AMP. The polypeptide is Phosphoribosyl-AMP cyclohydrolase (Bifidobacterium longum (strain DJO10A)).